Here is a 106-residue protein sequence, read N- to C-terminus: Cell division protein FtsB (106 aa).

At 1 to 3 (MRL) the chain is on the cytoplasmic side. The helical transmembrane segment at 4–21 (LTLIFVALIALLQYPLWL) threads the bilayer. The Periplasmic portion of the chain corresponds to 22 to 106 (GKGSWLRVWD…SPPAALTGAQ (85 aa)). A coiled-coil region spans residues 31 to 73 (DLNQKIVAQKAVNAELKLRNDTLDAEVRDLKQGNAAIEERARS).

The protein belongs to the FtsB family. As to quaternary structure, part of a complex composed of FtsB, FtsL and FtsQ.

The protein resides in the cell inner membrane. Essential cell division protein. May link together the upstream cell division proteins, which are predominantly cytoplasmic, with the downstream cell division proteins, which are predominantly periplasmic. This is Cell division protein FtsB from Methylobacillus flagellatus (strain ATCC 51484 / DSM 6875 / VKM B-1610 / KT).